Reading from the N-terminus, the 482-residue chain is Lipoamide acyltransferase component of branched-chain alpha-keto acid dehydrogenase complex, mitochondrial (482 aa).

Residues 1-61 (MAAVRMLRTW…HFLKTTAALR (61 aa)) constitute a mitochondrion transit peptide. Residues 64-139 (VVQFKLSDIG…YVGKPLVDIE (76 aa)) enclose the Lipoyl-binding domain. K105 carries the post-translational modification N6-lipoyllysine. The residue at position 133 (K133) is an N6-succinyllysine. Positions 145–160 (DSEEDVVETPAVSHDE) are critical for association with PPM1K. Residues 147–168 (EEDVVETPAVSHDEHTHQEIKG) are disordered. The span at 157–168 (SHDEHTHQEIKG) shows a compositional bias: basic and acidic residues. The region spanning 172–209 (LATPAVRRLAMENNIKLSEVVGSGKDGRILKEDILNYL) is the Peripheral subunit-binding (PSBD) domain. An N6-acetyllysine; alternate modification is found at K196. Residue K196 is modified to N6-succinyllysine; alternate. Position 202 is an N6-acetyllysine (K202). Position 220 is a phosphoserine (S220). N6-acetyllysine is present on residues K243 and K250. Residue K261 is modified to N6-succinyllysine. The residue at position 289 (K289) is an N6-acetyllysine; alternate. N6-succinyllysine; alternate is present on K289. R291 contacts CoA. N6-acetyllysine occurs at positions 295 and 304. CoA is bound by residues S306, D349, Q378, S399, N400, S403, G424, and I426. Residue K435 is modified to N6-acetyllysine. K440 carries the N6-acetyllysine; alternate modification. K440 carries the post-translational modification N6-succinyllysine; alternate. Active-site residues include H452 and D456.

The protein belongs to the 2-oxoacid dehydrogenase family. In terms of assembly, forms a 24-polypeptide structural core with octahedral symmetry that represents the E2 component of the branched-chain alpha-ketoacid dehydrogenase (BCKDH) complex. The BCKDH complex is composed of three major building blocks E1, E2 and E3. It is organized around E2, a 24-meric cubic core composed of DBT, to which are associated 6 to 12 copies of E1, and approximately 6 copies of the dehydrogenase E3, a DLD dimer. Interacts with PPM1K with a 24:1 stoichiometry; the N-terminal region (residues 49-61) of PPM1K and C-terminal linker of the lipoyl domain of DBT/E2 (residues 145-160) are critical for this interaction whereas the lipoyl prosthetic group is dispensable. This interaction requires colocalization in mitochondria. PPM1K competes with BCKDK for binding to DBT; this interaction is modulated by branched-chain alpha-keto acids (BCKAs). At steady state, BCKDH holoenzyme preferentially binds BCKDK and BCKDHA is phosphorylated. In response to high levels of BCKAs, BCKDK is replaced by PPM1K leading to BCKDHA dephosphorylation. The cofactor is (R)-lipoate.

Its subcellular location is the mitochondrion matrix. The enzyme catalyses N(6)-[(R)-dihydrolipoyl]-L-lysyl-[protein] + 2-methylpropanoyl-CoA = N(6)-[(R)-S(8)-2-methylpropanoyldihydrolipoyl]-L-lysyl-[protein] + CoA. The branched-chain alpha-keto dehydrogenase complex catalyzes the overall conversion of alpha-keto acids to acyl-CoA and CO(2). It contains multiple copies of three enzymatic components: branched-chain alpha-keto acid decarboxylase (E1), lipoamide acyltransferase (E2) and lipoamide dehydrogenase (E3). Within this complex, the catalytic function of this enzyme is to accept, and to transfer to coenzyme A, acyl groups that are generated by the branched-chain alpha-keto acid decarboxylase component. This Homo sapiens (Human) protein is Lipoamide acyltransferase component of branched-chain alpha-keto acid dehydrogenase complex, mitochondrial.